The following is a 562-amino-acid chain: Dihydroxy-acid dehydratase (562 aa).

Asp-80 is a binding site for Mg(2+). Cys-121 contributes to the [2Fe-2S] cluster binding site. The Mg(2+) site is built by Asp-122 and Lys-123. Lys-123 carries the N6-carboxylysine modification. Cys-194 contributes to the [2Fe-2S] cluster binding site. Glu-446 contributes to the Mg(2+) binding site. The active-site Proton acceptor is Ser-472.

Belongs to the IlvD/Edd family. Homodimer. Requires [2Fe-2S] cluster as cofactor. Mg(2+) serves as cofactor.

It carries out the reaction (2R)-2,3-dihydroxy-3-methylbutanoate = 3-methyl-2-oxobutanoate + H2O. The catalysed reaction is (2R,3R)-2,3-dihydroxy-3-methylpentanoate = (S)-3-methyl-2-oxopentanoate + H2O. Its pathway is amino-acid biosynthesis; L-isoleucine biosynthesis; L-isoleucine from 2-oxobutanoate: step 3/4. It functions in the pathway amino-acid biosynthesis; L-valine biosynthesis; L-valine from pyruvate: step 3/4. In terms of biological role, functions in the biosynthesis of branched-chain amino acids. Catalyzes the dehydration of (2R,3R)-2,3-dihydroxy-3-methylpentanoate (2,3-dihydroxy-3-methylvalerate) into 2-oxo-3-methylpentanoate (2-oxo-3-methylvalerate) and of (2R)-2,3-dihydroxy-3-methylbutanoate (2,3-dihydroxyisovalerate) into 2-oxo-3-methylbutanoate (2-oxoisovalerate), the penultimate precursor to L-isoleucine and L-valine, respectively. This chain is Dihydroxy-acid dehydratase, found in Staphylococcus aureus (strain COL).